A 412-amino-acid chain; its full sequence is Divalent metal cation transporter MntH (412 aa).

A run of 11 helical transmembrane segments spans residues 19-39 (LALM…GNFA), 46-66 (ASFG…AMLI), 94-114 (VWFY…AEFI), 122-142 (LILG…TFLI), 156-176 (VIGG…FFSQ), 196-216 (AVFL…IYLH), 241-261 (IAMT…AAAF), 290-310 (IFGL…TLAG), 322-342 (IPLW…ILMG), 348-368 (ILVM…VPLL), and 392-412 (AIVV…ALGL).

Belongs to the NRAMP family.

The protein localises to the cell inner membrane. H(+)-stimulated, divalent metal cation uptake system. The polypeptide is Divalent metal cation transporter MntH (Cronobacter sakazakii (strain ATCC BAA-894) (Enterobacter sakazakii)).